The primary structure comprises 84 residues: UPF0297 protein NT01CX_2279 (84 aa).

It belongs to the UPF0297 family.

The sequence is that of UPF0297 protein NT01CX_2279 from Clostridium novyi (strain NT).